Reading from the N-terminus, the 325-residue chain is Glyoxylate/hydroxypyruvate reductase B (325 aa).

Residues Arg-237 and Glu-266 contribute to the active site. His-285 serves as the catalytic Proton donor.

This sequence belongs to the D-isomer specific 2-hydroxyacid dehydrogenase family. GhrB subfamily. In terms of assembly, homodimer.

It localises to the cytoplasm. It carries out the reaction glycolate + NADP(+) = glyoxylate + NADPH + H(+). It catalyses the reaction (R)-glycerate + NAD(+) = 3-hydroxypyruvate + NADH + H(+). The catalysed reaction is (R)-glycerate + NADP(+) = 3-hydroxypyruvate + NADPH + H(+). Its function is as follows. Catalyzes the NADPH-dependent reduction of glyoxylate and hydroxypyruvate into glycolate and glycerate, respectively. The protein is Glyoxylate/hydroxypyruvate reductase B of Serratia proteamaculans (strain 568).